A 418-amino-acid chain; its full sequence is Ankyrin repeat domain-containing protein 61 (418 aa).

8 ANK repeats span residues 27 to 57, 74 to 103, 131 to 160, 166 to 195, 199 to 228, 233 to 272, 276 to 305, and 309 to 342; these read ALHS…NQPL, QPIF…DPEV, TRIQ…QVNA, NKHS…QVNA, SSMT…NVNC, TGNT…QVNA, EGQT…NVNI, and NGES…PLRL.

The chain is Ankyrin repeat domain-containing protein 61 (Ankrd61) from Rattus norvegicus (Rat).